A 214-amino-acid polypeptide reads, in one-letter code: Probable adenylyl-sulfate kinase (214 aa).

ATP is bound at residue 13–20 (GLSGAGKT). Catalysis depends on Ser87, which acts as the Phosphoserine intermediate. The tract at residues 174 to 199 (WNRTNTFPLKSRPNPPHRHKSKSSRA) is disordered.

Belongs to the APS kinase family.

The enzyme catalyses adenosine 5'-phosphosulfate + ATP = 3'-phosphoadenylyl sulfate + ADP + H(+). The protein operates within sulfur metabolism; hydrogen sulfide biosynthesis; sulfite from sulfate: step 2/3. In terms of biological role, catalyzes the synthesis of activated sulfate. The polypeptide is Probable adenylyl-sulfate kinase (Pseudomonas aeruginosa).